We begin with the raw amino-acid sequence, 245 residues long: DNA polymerase sliding clamp (245 aa).

The protein belongs to the PCNA family. Homotrimer. The subunits circularize to form a toroid; DNA passes through its center. Replication factor C (RFC) is required to load the toroid on the DNA.

Its function is as follows. Sliding clamp subunit that acts as a moving platform for DNA processing. Responsible for tethering the catalytic subunit of DNA polymerase and other proteins to DNA during high-speed replication. The chain is DNA polymerase sliding clamp from Archaeoglobus fulgidus (strain ATCC 49558 / DSM 4304 / JCM 9628 / NBRC 100126 / VC-16).